Reading from the N-terminus, the 131-residue chain is MPVTDSIADYLTRLRNAGQAKNKTTDIPYSTQKENISKLLVEKGYIKNYTVITSDRFPFIRVELKYGSNGTFAIKEITRVSKPGRRVYEGKDLRKYLGGLGLLILSTSKGILTDKEAREQGVGGEVLFRIL.

This sequence belongs to the universal ribosomal protein uS8 family. As to quaternary structure, part of the 30S ribosomal subunit. Contacts proteins S5 and S12.

In terms of biological role, one of the primary rRNA binding proteins, it binds directly to 16S rRNA central domain where it helps coordinate assembly of the platform of the 30S subunit. The polypeptide is Small ribosomal subunit protein uS8 (Prosthecochloris aestuarii (strain DSM 271 / SK 413)).